The primary structure comprises 172 residues: Mitochondrial import inner membrane translocase subunit Tim17-B (172 aa).

A disulfide bridge connects residues C9 and C78. 3 helical membrane-spanning segments follow: residues 17 to 37 (CGGAFTMGVIGGGVFQAIKGF), 61 to 77 (QIGGSFAVWGGLFSTID), and 113 to 133 (VGSAMMGGILLALIEGVGILL). A disordered region spans residues 147-172 (FLEDPSQLTPKEGSPAPGYPNYQQYH).

The protein belongs to the Tim17/Tim22/Tim23 family. As to quaternary structure, component of the TIM23 complex at least composed of TIMM23, TIMM17 (TIMM17A or TIMM17B) and TIMM50. The complex interacts with the TIMM44 component of the PAM complex. The complex also interacts with DNAJC15.

The protein resides in the mitochondrion inner membrane. Functionally, essential component of the TIM23 complex, a complex that mediates the translocation of transit peptide-containing proteins across the mitochondrial inner membrane. In Mus musculus (Mouse), this protein is Mitochondrial import inner membrane translocase subunit Tim17-B (Timm17b).